The sequence spans 278 residues: Secoisolariciresinol dehydrogenase (278 aa).

NAD(+) is bound by residues 23–28 (GGAGGI), Asp-47, Val-73, and Asn-99. Residues Ser-104 and Ser-164 each contribute to the substrate site. Catalysis depends on Tyr-167, which acts as the Proton donor/acceptor. NAD(+) is bound by residues Lys-171 and Val-200.

The protein belongs to the short-chain dehydrogenases/reductases (SDR) family. As to quaternary structure, homotetramer.

The catalysed reaction is (-)-secoisolariciresinol + 2 NAD(+) = (-)-matairesinol + 2 NADH + 2 H(+). Functionally, oxidoreductase involved in lignan biosynthesis. Catalyzes the stereospecific conversion of (-)-secoisolariciresinol to (-)-matairesinol via a lactol intermediate. This chain is Secoisolariciresinol dehydrogenase, found in Podophyllum peltatum (American mandrake).